The primary structure comprises 96 residues: Aspartyl/glutamyl-tRNA(Asn/Gln) amidotransferase subunit C (96 aa).

This sequence belongs to the GatC family. Heterotrimer of A, B and C subunits.

It carries out the reaction L-glutamyl-tRNA(Gln) + L-glutamine + ATP + H2O = L-glutaminyl-tRNA(Gln) + L-glutamate + ADP + phosphate + H(+). The enzyme catalyses L-aspartyl-tRNA(Asn) + L-glutamine + ATP + H2O = L-asparaginyl-tRNA(Asn) + L-glutamate + ADP + phosphate + 2 H(+). In terms of biological role, allows the formation of correctly charged Asn-tRNA(Asn) or Gln-tRNA(Gln) through the transamidation of misacylated Asp-tRNA(Asn) or Glu-tRNA(Gln) in organisms which lack either or both of asparaginyl-tRNA or glutaminyl-tRNA synthetases. The reaction takes place in the presence of glutamine and ATP through an activated phospho-Asp-tRNA(Asn) or phospho-Glu-tRNA(Gln). The polypeptide is Aspartyl/glutamyl-tRNA(Asn/Gln) amidotransferase subunit C (Sulfurovum sp. (strain NBC37-1)).